A 732-amino-acid chain; its full sequence is S-adenosyl-L-methionine-dependent tRNA 4-demethylwyosine synthase TYW1 (732 aa).

The Flavodoxin-like domain occupies 79-237 (VKIFYGSQTG…DFRAWKTKFI (159 aa)). Residues 85-89 (SQTGT) and 176-208 (VFGL…HRVM) each bind FMN. A disordered region spans residues 248-314 (RKKSCGGHCK…HQSLNSIVDV (67 aa)). Over residues 259–286 (GKCESHQHGSEEREEGSHEQDELHHRDT) the composition is skewed to basic and acidic residues. Residues 287-301 (EEEEPFESSSEEEFG) are compositionally biased toward acidic residues. The region spanning 400–644 (YGIESHRCME…VDLIPEYEIA (245 aa)) is the Radical SAM core domain. Residues Cys416, Cys420, and Cys423 each contribute to the [4Fe-4S] cluster site.

It belongs to the TYW1 family. Requires [4Fe-4S] cluster as cofactor.

The enzyme catalyses N(1)-methylguanosine(37) in tRNA(Phe) + pyruvate + S-adenosyl-L-methionine = 4-demethylwyosine(37) in tRNA(Phe) + 5'-deoxyadenosine + L-methionine + CO2 + H2O. It participates in tRNA modification; wybutosine-tRNA(Phe) biosynthesis. In terms of biological role, probable component of the wybutosine biosynthesis pathway. Wybutosine is a hyper modified guanosine with a tricyclic base found at the 3'-position adjacent to the anticodon of eukaryotic phenylalanine tRNA. Catalyzes the condensation of N-methylguanine with 2 carbon atoms from pyruvate to form the tricyclic 4-demethylwyosine, an intermediate in wybutosine biosynthesis. This is S-adenosyl-L-methionine-dependent tRNA 4-demethylwyosine synthase TYW1 (TYW1) from Homo sapiens (Human).